We begin with the raw amino-acid sequence, 378 residues long: Glutamate 5-kinase (378 aa).

An ATP-binding site is contributed by lysine 15. Substrate-binding residues include serine 56, aspartate 143, and asparagine 155. 175 to 176 provides a ligand contact to ATP; sequence SD. Residues 281–358 form the PUA domain; the sequence is KGTLTIDAGA…PDVAVILGIS (78 aa).

The protein belongs to the glutamate 5-kinase family.

It localises to the cytoplasm. It carries out the reaction L-glutamate + ATP = L-glutamyl 5-phosphate + ADP. The protein operates within amino-acid biosynthesis; L-proline biosynthesis; L-glutamate 5-semialdehyde from L-glutamate: step 1/2. Functionally, catalyzes the transfer of a phosphate group to glutamate to form L-glutamate 5-phosphate. The chain is Glutamate 5-kinase from Bradyrhizobium sp. (strain BTAi1 / ATCC BAA-1182).